The chain runs to 239 residues: Pyridoxine 5'-phosphate synthase (239 aa).

Position 7 (N7) interacts with 3-amino-2-oxopropyl phosphate. 9-10 serves as a coordination point for 1-deoxy-D-xylulose 5-phosphate; the sequence is DH. R18 is a binding site for 3-amino-2-oxopropyl phosphate. Catalysis depends on H43, which acts as the Proton acceptor. 1-deoxy-D-xylulose 5-phosphate is bound by residues R45 and H50. The active-site Proton acceptor is the E70. Residue T100 coordinates 1-deoxy-D-xylulose 5-phosphate. H191 serves as the catalytic Proton donor. 3-amino-2-oxopropyl phosphate is bound by residues G192 and 213–214; that span reads GH.

This sequence belongs to the PNP synthase family. Homooctamer; tetramer of dimers.

The protein resides in the cytoplasm. It catalyses the reaction 3-amino-2-oxopropyl phosphate + 1-deoxy-D-xylulose 5-phosphate = pyridoxine 5'-phosphate + phosphate + 2 H2O + H(+). Its pathway is cofactor biosynthesis; pyridoxine 5'-phosphate biosynthesis; pyridoxine 5'-phosphate from D-erythrose 4-phosphate: step 5/5. Functionally, catalyzes the complicated ring closure reaction between the two acyclic compounds 1-deoxy-D-xylulose-5-phosphate (DXP) and 3-amino-2-oxopropyl phosphate (1-amino-acetone-3-phosphate or AAP) to form pyridoxine 5'-phosphate (PNP) and inorganic phosphate. The protein is Pyridoxine 5'-phosphate synthase of Gloeobacter violaceus (strain ATCC 29082 / PCC 7421).